The primary structure comprises 84 residues: U4-theraphotoxin-Hhn1a (84 aa).

Residues 1 to 22 (MKVTLIAILTCAAVLVLHTTAA) form the signal peptide. A propeptide spanning residues 23–47 (EELEESQLMEVGMPDTELAAVDGER) is cleaved from the precursor. 3 disulfides stabilise this stretch: cysteine 51-cysteine 65, cysteine 55-cysteine 76, and cysteine 70-cysteine 81.

The protein belongs to the neurotoxin 12 (Hwtx-2) family. 02 (Hwtx-2) subfamily. Expressed by the venom gland.

It is found in the secreted. Functionally, postsynaptic neurotoxin. In Cyriopagopus hainanus (Chinese bird spider), this protein is U4-theraphotoxin-Hhn1a.